A 347-amino-acid chain; its full sequence is D-alanine--D-alanine ligase (347 aa).

Residues 134–332 (KLYAKDLGVK…LAQSLPKTPK (199 aa)) enclose the ATP-grasp domain. 161 to 216 (LIGFNFPFIVKPSNAGSSLGVNVVKEEKELIYALDSAFEYSKEVLIEPFIQGVKEY) is an ATP binding site. D288, E300, and N302 together coordinate Mg(2+).

It belongs to the D-alanine--D-alanine ligase family. Requires Mg(2+) as cofactor. Mn(2+) is required as a cofactor.

It is found in the cytoplasm. It catalyses the reaction 2 D-alanine + ATP = D-alanyl-D-alanine + ADP + phosphate + H(+). It functions in the pathway cell wall biogenesis; peptidoglycan biosynthesis. In terms of biological role, cell wall formation. The polypeptide is D-alanine--D-alanine ligase (Helicobacter pylori (strain J99 / ATCC 700824) (Campylobacter pylori J99)).